The chain runs to 360 residues: Metalloendoproteinase 5-MMP (360 aa).

An N-terminal signal peptide occupies residues 1–20 (MRTLLLTILIFFFTVNPISA). A propeptide spans 21-142 (KFYTNVSSIP…GGKILRTTEK (122 aa)) (activation peptide). Asn25, Asn36, and Asn78 each carry an N-linked (GlcNAc...) asparagine glycan. The Cysteine switch motif lies at 117–124 (PRCGNPDL). Position 119 (Cys119) interacts with Zn(2+). Residues Asn168 and Asn191 are each glycosylated (N-linked (GlcNAc...) asparagine). His270 is a Zn(2+) binding site. The active site involves Glu271. Residues His274 and His280 each contribute to the Zn(2+) site. The interval 312 to 336 (LYGGNPNGDGGGSKPSRESQSTGGD) is disordered. Ser337 carries the GPI-anchor amidated serine lipid modification. Positions 338–360 (VRRWRGWMISLSSIATCIFLISV) are cleaved as a propeptide — removed in mature form.

Belongs to the peptidase M10A family. Matrix metalloproteinases (MMPs) subfamily. Zn(2+) serves as cofactor. In terms of tissue distribution, mostly expressed in leaves, roots and stems, and, to a lower extent, in flowers.

Its subcellular location is the cell membrane. Its activity is regulated as follows. Repressed by acetohydroxamic acid (AHA). Matrix metalloproteinases (MMPs) or matrixins may play a role in the degradation and remodeling of the extracellular matrix (ECM) during development or in response to stresses. Active on Mca-KESAbuNLFVLKDpaR-NH(2) (QF75) and, to some extent, on McaPLGLDpaAR-NH(2) (QF24), myelin basic protein (MBP) and beta-casein. This Arabidopsis thaliana (Mouse-ear cress) protein is Metalloendoproteinase 5-MMP.